Here is a 214-residue protein sequence, read N- to C-terminus: MSGLVALCRARASASSSLFNSVIRPAFRNFSTGFADTQNKSLVAQMKEEMLHMDINSMIGSSMPLGMMRIGTIIHNIEMNPGQGAKMVRAAGTNAKILKEPAKGKCLIKLPSGDTKWINAKCRATIGTVSNPSHGTKKLYKAGQSRWLGIRPKVRGVAMNPCDHPHGGGEGKSKSSGSRGRTSVSPWGKPCKGGYKSASVKKKKKRLAEAAAKM.

Residues 1-30 constitute a mitochondrion transit peptide; that stretch reads MSGLVALCRARASASSSLFNSVIRPAFRNF. The interval 157–214 is disordered; sequence VAMNPCDHPHGGGEGKSKSSGSRGRTSVSPWGKPCKGGYKSASVKKKKKRLAEAAAKM. The span at 163 to 173 shows a compositional bias: basic and acidic residues; sequence DHPHGGGEGKS. Positions 174-185 are enriched in low complexity; it reads KSSGSRGRTSVS.

Belongs to the universal ribosomal protein uL2 family. In terms of assembly, component of the mitochondrial ribosome large subunit.

It localises to the mitochondrion. The protein is Large ribosomal subunit protein uL2my, C-terminal part of Arabidopsis thaliana (Mouse-ear cress).